Consider the following 602-residue polypeptide: UvrABC system protein C (602 aa).

A GIY-YIG domain is found at 17-94; sequence KTSGCYKMYS…IKKYKPTYNI (78 aa). A UVR domain is found at 199 to 234; sequence SKLLNDIEIKMKEVIMKENFEAAIKLKETKKSLIEI.

This sequence belongs to the UvrC family. As to quaternary structure, interacts with UvrB in an incision complex.

It localises to the cytoplasm. In terms of biological role, the UvrABC repair system catalyzes the recognition and processing of DNA lesions. UvrC both incises the 5' and 3' sides of the lesion. The N-terminal half is responsible for the 3' incision and the C-terminal half is responsible for the 5' incision. This is UvrABC system protein C from Borrelia recurrentis (strain A1).